A 130-amino-acid chain; its full sequence is Holo-[acyl-carrier-protein] synthase (130 aa).

Residues D9 and E58 each coordinate Mg(2+).

Belongs to the P-Pant transferase superfamily. AcpS family. Requires Mg(2+) as cofactor.

The protein resides in the cytoplasm. It catalyses the reaction apo-[ACP] + CoA = holo-[ACP] + adenosine 3',5'-bisphosphate + H(+). Transfers the 4'-phosphopantetheine moiety from coenzyme A to a Ser of acyl-carrier-protein. The sequence is that of Holo-[acyl-carrier-protein] synthase from Mycobacterium leprae (strain Br4923).